A 360-amino-acid polypeptide reads, in one-letter code: Peptide chain release factor 1 (360 aa).

N5-methylglutamine is present on Gln235. Basic and acidic residues predominate over residues 284–293 (ARRQQEESST). Residues 284 to 314 (ARRQQEESSTRRNLLGSGDRSDRNRTYNFPQ) form a disordered region.

It belongs to the prokaryotic/mitochondrial release factor family. In terms of processing, methylated by PrmC. Methylation increases the termination efficiency of RF1.

The protein resides in the cytoplasm. Peptide chain release factor 1 directs the termination of translation in response to the peptide chain termination codons UAG and UAA. This is Peptide chain release factor 1 from Erwinia tasmaniensis (strain DSM 17950 / CFBP 7177 / CIP 109463 / NCPPB 4357 / Et1/99).